Reading from the N-terminus, the 193-residue chain is Thioredoxin reductase-like selenoprotein T1b (193 aa).

The N-terminal stretch at 1 to 21 is a signal peptide; the sequence is METRCLYLLLVCVLSVNHATA. The segment at residues 44 to 47 is a cross-link (cysteinyl-selenocysteine (Cys-Sec)); it reads CVSU. Position 47 (Sec47) is a non-standard amino acid, selenocysteine.

Belongs to the SelWTH family. Selenoprotein T subfamily. May contain a selenide-sulfide bond between Cys-44 and Sec-47. This bond is speculated to serve as redox-active pair. Widely expressed in the embryo. High level in embryonic blood at 24 hours post-fertilization (hpf).

Its subcellular location is the endoplasmic reticulum membrane. It catalyses the reaction [thioredoxin]-dithiol + NADP(+) = [thioredoxin]-disulfide + NADPH + H(+). Selenoprotein with thioredoxin reductase-like oxidoreductase activity. This Danio rerio (Zebrafish) protein is Thioredoxin reductase-like selenoprotein T1b.